A 201-amino-acid polypeptide reads, in one-letter code: Large ribosomal subunit protein bL25 (201 aa).

The protein belongs to the bacterial ribosomal protein bL25 family. CTC subfamily. As to quaternary structure, part of the 50S ribosomal subunit; part of the 5S rRNA/L5/L18/L25 subcomplex. Contacts the 5S rRNA. Binds to the 5S rRNA independently of L5 and L18.

This is one of the proteins that binds to the 5S RNA in the ribosome where it forms part of the central protuberance. This is Large ribosomal subunit protein bL25 from Aromatoleum aromaticum (strain DSM 19018 / LMG 30748 / EbN1) (Azoarcus sp. (strain EbN1)).